A 110-amino-acid chain; its full sequence is Small ribosomal subunit protein bS16 (110 aa).

Positions 82–103 (VKKREARNNPEKAVPRKERKAQ) are enriched in basic and acidic residues. Residues 82–110 (VKKREARNNPEKAVPRKERKAQAEAAAKG) form a disordered region.

The protein belongs to the bacterial ribosomal protein bS16 family.

This chain is Small ribosomal subunit protein bS16, found in Bradyrhizobium sp. (strain ORS 278).